The sequence spans 883 residues: Protein SEY1 homolog (883 aa).

Over 1–795 (MQMDRKTQII…ETGGKMSLKN (795 aa)) the chain is Cytoplasmic. The region spanning 33–279 (GFNYNVVAIL…IPSDGFAHYC (247 aa)) is the GB1/RHD3-type G domain. Residue 43-50 (GSQSSGKS) participates in GTP binding. Residues 673–693 (LDEIMDVLKSKLDEISDNLSS) adopt a coiled-coil conformation. The chain crosses the membrane as a helical span at residues 796 to 816 (VPLFFWVILLILGWNELLFFI). Over 817–819 (RFF) the chain is Lumenal. The helical transmembrane segment at 820–840 (FRLNIILPLFLAAAVILSTLF) threads the bilayer. Over 841-883 (FNGNMEVLSTINKVVFFLAKSSFGFYRQLQTMGEKVAQVPTAD) the chain is Cytoplasmic.

Belongs to the TRAFAC class dynamin-like GTPase superfamily. GB1/RHD3 GTPase family. RHD3 subfamily.

The protein resides in the endoplasmic reticulum membrane. In terms of biological role, probable GTP-binding protein involved in generating and maintaining the structure of the tubular endoplasmic reticulum network. The protein is Protein SEY1 homolog of Plasmodium knowlesi (strain H).